The sequence spans 280 residues: Mitochondrial outer membrane protein porin 2 (280 aa).

This sequence belongs to the eukaryotic mitochondrial porin (TC 1.B.8.1) family. Expressed in roots, stems, leaves, palea, lemma and pollen.

It localises to the mitochondrion outer membrane. Functionally, forms a channel through the mitochondrial outer membrane that allows diffusion of small hydrophilic molecules. The channel adopts an open conformation at low or zero membrane potential and a closed conformation at potentials above 30-40 mV. The open state has a weak anion selectivity whereas the closed state is cation-selective. This chain is Mitochondrial outer membrane protein porin 2 (VDAC2), found in Oryza sativa subsp. japonica (Rice).